Reading from the N-terminus, the 272-residue chain is UPF0759 protein YecE (272 aa).

Belongs to the UPF0759 family.

The chain is UPF0759 protein YecE (yecE) from Escherichia coli (strain K12).